A 35-amino-acid chain; its full sequence is Photosystem II reaction center protein T (35 aa).

Residues 3–23 traverse the membrane as a helical segment; sequence SVAYILILTLAIGVLFFAIAF.

This sequence belongs to the PsbT family. In terms of assembly, PSII is composed of 1 copy each of membrane proteins PsbA, PsbB, PsbC, PsbD, PsbE, PsbF, PsbH, PsbI, PsbJ, PsbK, PsbL, PsbM, PsbT, PsbX, PsbY, PsbZ, Psb30/Ycf12, peripheral proteins PsbO, CyanoQ (PsbQ), PsbU, PsbV and a large number of cofactors. It forms dimeric complexes.

The protein resides in the cellular thylakoid membrane. Its function is as follows. Found at the monomer-monomer interface of the photosystem II (PS II) dimer, plays a role in assembly and dimerization of PSII. PSII is a light-driven water plastoquinone oxidoreductase, using light energy to abstract electrons from H(2)O, generating a proton gradient subsequently used for ATP formation. The protein is Photosystem II reaction center protein T of Nostoc sp. (strain PCC 7120 / SAG 25.82 / UTEX 2576).